We begin with the raw amino-acid sequence, 23 residues long: Phallacidin proprotein 1 (23 aa).

A propeptide is located at residue P1. Positions 2-8 form a cross-link, cyclopeptide (Ala-Pro); the sequence is AWLVDCP. The segment at residues 3-7 is a cross-link (2'-cysteinyl-6'-hydroxytryptophan sulfoxide (Trp-Cys)); it reads WLVDC. Positions 9–23 are excised as a propeptide; that stretch reads CVGDDVNRLLTRGER.

The protein belongs to the MSDIN fungal toxin family. In terms of processing, processed by the macrocyclase-peptidase enzyme POPB to yield a toxic cyclic heptapeptide. POPB first removes 10 residues from the N-terminus. Conformational trapping of the remaining peptide forces the enzyme to release this intermediate rather than proceed to macrocyclization. The enzyme rebinds the remaining peptide in a different conformation and catalyzes macrocyclization of the N-terminal 7 residues.

In terms of biological role, toxin that belongs to the bicyclic heptapeptides called phallotoxins. Although structurally related to amatoxins, phallotoxins have a different mode of action, which is the stabilization of F-actin. Phallotoxins are poisonous when administered parenterally, but not orally because of poor absorption. This is Phallacidin proprotein 1 from Amanita exitialis (Guangzhou destroying angel).